We begin with the raw amino-acid sequence, 604 residues long: Aspartate--tRNA(Asp/Asn) ligase (604 aa).

Glu-168 is a binding site for L-aspartate. The tract at residues 192–195 is aspartate; sequence QLFK. Arg-214 contributes to the L-aspartate binding site. ATP-binding positions include 214–216 and Gln-223; that span reads RDE. His-446 lines the L-aspartate pocket. Glu-480 serves as a coordination point for ATP. Arg-487 serves as a coordination point for L-aspartate. 532–535 is an ATP binding site; sequence GWDR. Residues 575–604 are disordered; that stretch reads LEAGVDARPKPEARAQAGTAGPAAPVADPT. Positions 577–587 are enriched in basic and acidic residues; sequence AGVDARPKPEA. Positions 588 to 604 are enriched in low complexity; the sequence is RAQAGTAGPAAPVADPT.

The protein belongs to the class-II aminoacyl-tRNA synthetase family. Type 1 subfamily. In terms of assembly, homodimer.

It is found in the cytoplasm. It carries out the reaction tRNA(Asx) + L-aspartate + ATP = L-aspartyl-tRNA(Asx) + AMP + diphosphate. In terms of biological role, aspartyl-tRNA synthetase with relaxed tRNA specificity since it is able to aspartylate not only its cognate tRNA(Asp) but also tRNA(Asn). Reaction proceeds in two steps: L-aspartate is first activated by ATP to form Asp-AMP and then transferred to the acceptor end of tRNA(Asp/Asn). The sequence is that of Aspartate--tRNA(Asp/Asn) ligase from Salinispora arenicola (strain CNS-205).